The primary structure comprises 500 residues: Coiled-coil domain-containing protein 85A (500 aa).

Low complexity predominate over residues 1-23 (MSKAAGGSAPAAESCPSAPAGAS). A disordered region spans residues 1 to 30 (MSKAAGGSAPAAESCPSAPAGASTPTGVDD). 2 coiled-coil regions span residues 38–104 (ELLQ…RDLC) and 132–171 (MHKE…DEEK). Disordered stretches follow at residues 200-405 (RDVG…SGMN) and 426-465 (NRML…QPEP). Over residues 204–215 (DGSSTSSTGSTD) the composition is skewed to low complexity. The segment covering 231-254 (HLQKPRSEGSPEHTKHRSTSPEHL) has biased composition (basic and acidic residues). The span at 372–381 (GSGGSGGGSR) shows a compositional bias: gly residues. Residues 383-395 (GTLRRPAQEDSSS) show a composition bias toward basic and acidic residues. Residues 404–429 (MNESTLSYVRQLEARVRQLEEENRML) are a coiled coil. Positions 434-463 (FRLSSGADGNNSSLNSPASFSGHTTPSQQP) are enriched in polar residues. R488 carries the post-translational modification Asymmetric dimethylarginine.

Belongs to the CCDC85 family. May interact with ARVCF; CTNND1; CTNND2 and PKP4.

The protein localises to the cell junction. The protein resides in the adherens junction. In terms of biological role, may play a role in cell-cell adhesion and epithelium development through its interaction with proteins of the beta-catenin family. The chain is Coiled-coil domain-containing protein 85A (Ccdc85a) from Mus musculus (Mouse).